Reading from the N-terminus, the 368-residue chain is Glycine betaine monooxygenase reductase subunit (368 aa).

The region spanning 16–119 (NGRHNVRCVK…HGPVGDFNVI (104 aa)) is the FAD-binding FR-type domain. In terms of domain architecture, 2Fe-2S ferredoxin-type spans 284 to 368 (LQVEFSNSGK…TPKSHVAIEF (85 aa)). [2Fe-2S] cluster is bound by residues C318, C323, C326, and C356.

This sequence in the N-terminal section; belongs to the FAD-binding oxidoreductase type 6 family. As to quaternary structure, monomer. The system is composed of an oxygenase subunit (BmoA) and a reductase subunit (BmoB). Maximal specific activity is obtained when the ratio of BmoA to BmoB is 5:1. FAD is required as a cofactor. It depends on [2Fe-2S] cluster as a cofactor.

It catalyses the reaction glycine betaine + NADH + O2 + H(+) = N,N-dimethylglycine + formaldehyde + NAD(+) + H2O. In terms of biological role, involved in degradation of glycine betaine. Part of a Rieske-type oxygenase system that catalyzes the conversion of glycine betaine (GB) to dimethylglycine (DMG). This subunit is the ferredoxin reductase component of the system. NADH is the preferred electron donor. The protein is Glycine betaine monooxygenase reductase subunit of Chromohalobacter salexigens (strain ATCC BAA-138 / DSM 3043 / CIP 106854 / NCIMB 13768 / 1H11).